The sequence spans 588 residues: Arginine--tRNA ligase (588 aa).

A 'HIGH' region motif is present at residues 124–134 (PNVAKPMHVGH).

This sequence belongs to the class-I aminoacyl-tRNA synthetase family. Monomer.

It localises to the cytoplasm. The enzyme catalyses tRNA(Arg) + L-arginine + ATP = L-arginyl-tRNA(Arg) + AMP + diphosphate. This Maricaulis maris (strain MCS10) (Caulobacter maris) protein is Arginine--tRNA ligase.